The primary structure comprises 487 residues: NADH-quinone oxidoreductase subunit N (487 aa).

Transmembrane regions (helical) follow at residues 12–32 (VLIL…LIGV), 40–60 (LTVT…IVLF), 79–99 (YMKI…VGFS), 104–124 (FDIF…MLMI), 129–149 (MLSL…LAAI), 164–184 (FVLG…LYGF), 201–221 (ILHL…AFKI), 248–268 (APKI…FIPL), 281–301 (ILIF…IGQT), 310–330 (SSIG…ILGV), 332–352 (GILI…AFIL), 378–398 (AIVM…AGFF), 411–431 (GLVP…FYYL), and 455–475 (LCLC…FWFS).

The protein belongs to the complex I subunit 2 family. As to quaternary structure, NDH-1 is composed of 14 different subunits. Subunits NuoA, H, J, K, L, M, N constitute the membrane sector of the complex.

The protein localises to the cell inner membrane. The enzyme catalyses a quinone + NADH + 5 H(+)(in) = a quinol + NAD(+) + 4 H(+)(out). Functionally, NDH-1 shuttles electrons from NADH, via FMN and iron-sulfur (Fe-S) centers, to quinones in the respiratory chain. The immediate electron acceptor for the enzyme in this species is believed to be ubiquinone. Couples the redox reaction to proton translocation (for every two electrons transferred, four hydrogen ions are translocated across the cytoplasmic membrane), and thus conserves the redox energy in a proton gradient. The protein is NADH-quinone oxidoreductase subunit N of Bartonella bacilliformis (strain ATCC 35685 / KC583 / Herrer 020/F12,63).